Reading from the N-terminus, the 130-residue chain is Anti-adapter protein IraD (130 aa).

Belongs to the GpW/Gp25 family. IraD subfamily. Interacts with RssB.

Its subcellular location is the cytoplasm. Functionally, inhibits RpoS proteolysis by regulating RssB activity, thereby increasing the stability of the sigma stress factor RpoS during oxidative stress. Its effect on RpoS stability is due to its interaction with RssB, which probably blocks the interaction of RssB with RpoS, and the consequent delivery of the RssB-RpoS complex to the ClpXP protein degradation pathway. The sequence is that of Anti-adapter protein IraD from Shigella boydii serotype 4 (strain Sb227).